Here is a 279-residue protein sequence, read N- to C-terminus: Putative methyltransferase Jann_4284 (279 aa).

The sequence is that of Putative methyltransferase Jann_4284 from Jannaschia sp. (strain CCS1).